A 551-amino-acid polypeptide reads, in one-letter code: Solute carrier family 22 member 3 (551 aa).

A helical membrane pass occupies residues 21-41; it reads VFLLLCLTGVTFAFLFVGVVF. 3 N-linked (GlcNAc...) asparagine glycosylation sites follow: asparagine 72, asparagine 99, and asparagine 114. A helical transmembrane segment spans residues 177-197; the sequence is LIIYLISCFGVGITGVVVAFA. Asparagine 199 carries N-linked (GlcNAc...) asparagine glycosylation. 2 consecutive transmembrane segments (helical) span residues 236-256 and 264-284; these read IVGIVIQMFFTLGIIILPGIA and GIQLAISLPSFLFLLYYWVVP. Residues 284 to 288 carry the Proline-rich sequence motif; the sequence is PESPR. Asparagine 317 carries an N-linked (GlcNAc...) asparagine glycan. 3 helical membrane passes run 376 to 396, 464 to 484, and 493 to 513; these read IDFFISGLVELPGALLILLTI, GVSLCSGLCDFGGIIAPFLLF, and LPLIIFGILASVCGGLVMLLP.

This sequence belongs to the major facilitator (TC 2.A.1) superfamily. Organic cation transporter (TC 2.A.1.19) family. As to expression, highly expressed in placenta. Highly expressed in kidney cortex. In kidney, expressed specifically in the proximal and distal convoluted tubules and within Bowman capsule. Expressed in brain, particularly in dopaminergic neurons of the substantia nigra compacta, non-aminergic neurons of the ventral tegmental area, substantia nigra reticulata, locus coeruleus, hippocampus and cortex. In brain, also detected in astrocytes in the substantia nigra reticulata, several hypothalamic nuclei and nigrostriatal region. Expressed in neurons and glial cells of amygdala.

It is found in the cell membrane. It localises to the apical cell membrane. The protein resides in the basolateral cell membrane. Its subcellular location is the mitochondrion membrane. The protein localises to the endomembrane system. It is found in the nucleus membrane. It localises to the nucleus outer membrane. It catalyses the reaction (R)-noradrenaline(out) = (R)-noradrenaline(in). The catalysed reaction is (R)-adrenaline(out) = (R)-adrenaline(in). The enzyme catalyses serotonin(out) = serotonin(in). It carries out the reaction dopamine(out) = dopamine(in). It catalyses the reaction histamine(out) = histamine(in). The catalysed reaction is tyramine(in) = tyramine(out). The enzyme catalyses guanidine(out) = guanidine(in). It carries out the reaction agmatine(out) = agmatine(in). It catalyses the reaction spermidine(in) = spermidine(out). The catalysed reaction is L-histidyl-L-proline diketopiperazine(in) = L-histidyl-L-proline diketopiperazine(out). The enzyme catalyses (R)-salsolinol(in) = (R)-salsolinol(out). Electrogenic voltage-dependent transporter that mediates the transport of a variety of organic cations such as endogenous bioactive amines, cationic drugs and xenobiotics. Cation cellular uptake or release is driven by the electrochemical potential, i.e. membrane potential and concentration gradient. Functions as a Na(+)- and Cl(-)-independent, bidirectional uniporter. Implicated in monoamine neurotransmitters uptake such as dopamine, adrenaline/epinephrine, noradrenaline/norepinephrine, homovanillic acid, histamine, serotonin and tyramine, thereby supporting a role in homeostatic regulation of aminergic neurotransmission in the brain. Transports dopaminergic neuromodulators cyclo(his-pro) and salsolinol with low efficiency. May be involved in the uptake and disposition of cationic compounds by renal clearance from the blood flow. May contribute to regulate the transport of cationic compounds in testis across the blood-testis-barrier. Mediates the transport of polyamine spermidine and putrescine. Mediates the bidirectional transport of polyamine agmatine. Also transports guanidine. May also mediate intracellular transport of organic cations, thereby playing a role in amine metabolism and intracellular signaling. The polypeptide is Solute carrier family 22 member 3 (Mus musculus (Mouse)).